The primary structure comprises 296 residues: Zinc finger CCCH-type antiviral protein 1-like (296 aa).

The residue at position 2 (A2) is an N-acetylalanine. 2 consecutive C3H1-type zinc fingers follow at residues 111 to 136 (LCRR…HDIH) and 198 to 219 (VCKS…HQLI).

This is Zinc finger CCCH-type antiviral protein 1-like (Zc3hav1l) from Mus musculus (Mouse).